The following is an 897-amino-acid chain: MTIQSFAIEVQMSVDYLIQQFLDIGITKTKFDFITQSEKEILFRHMNVNKIAVFNKLFLQRKTHSTLNVSSTNGKSKKVKVEVRKKRVYMVPCSIRKSHVSNNTNILLVENDNSKDKYKSDDCNELSELVACDENKISSNENQVMCFISQKEKLDHFTIRQDYVRTNELVKDVNQDLDHQIRDRKGLSNSVCCDVLLNVQDEQHDDNNFSCGLSDDMAVSNNIPEHDKQKLENVRKNLTDRLRSTRTRNLSKLVKQNKHNNSKVCMIYESDKDEKLYVLPSSRVYKNKRKQSILVQSFNKPMQKTVRDVVIGETISVAELSNKMSIKSSSMIKMMMKLGLMVTINQNLDQETAQLVVEEMGHNAILRRENALEELIMHDNNNDYQNISSKLDNAKNDMGYKNRAPIVTIMGHVDHGKTSLLDYIRSTNVASSESGGITQNIGAYCVQLANNDMVTFIDTPGHEAFTDMRARGIQLTDIVVLVVAADDGVMPQTVEAIQYIRDGNLPVIIAINKIDKSVTNVERIKNELNSYGFIPEEWGGHTQFVNVSAVSGEGVNDLLDSILVQSEILELKSMHHGLAKAVVIESSLDRSRGPVVTVLVRSGELKCGDIVLCGTEYGRVRAMRDSLGFDVIKAGPSIPVELLGLSGIPGTGEWLVVVNNEKKAREVALYRKEKKREIKLARKSEKTIIENFNSMDIIKIKELNFIIKSDTQGSMEVICESLKKLSTNKMVMKILSASIGNVTETDAVLALSSHSRILAFNVKVDLSAKNIIELNHINIQYYSVIYSLLDEVKELISSTIAPQVDFKVIGIAKVHNIFQSPRYGTIAGCMVTQGVIKLHKQIKIVRNGIIMYKGVLDSLRHFKNDVSEVKIGVECGIGIKNYSDVCSGDIIEVLDKI.

In terms of domain architecture, tr-type G spans 402–570 (NRAPIVTIMG…SILVQSEILE (169 aa)). The G1 stretch occupies residues 411-418 (GHVDHGKT). 411–418 (GHVDHGKT) is a GTP binding site. The G2 stretch occupies residues 436–440 (GITQN). Residues 458 to 461 (DTPG) are G3. GTP-binding positions include 458-462 (DTPGH) and 512-515 (NKID). Positions 512 to 515 (NKID) are G4. The interval 548–550 (SAV) is G5.

The protein belongs to the TRAFAC class translation factor GTPase superfamily. Classic translation factor GTPase family. IF-2 subfamily.

It is found in the cytoplasm. In terms of biological role, one of the essential components for the initiation of protein synthesis. Protects formylmethionyl-tRNA from spontaneous hydrolysis and promotes its binding to the 30S ribosomal subunits. Also involved in the hydrolysis of GTP during the formation of the 70S ribosomal complex. This Blochmanniella floridana protein is Translation initiation factor IF-2.